A 140-amino-acid polypeptide reads, in one-letter code: uncharacterized protein (140 aa).

3 helical membrane passes run 20-42 (ILYYGGLIGIIFMAITFAIYVSG), 88-110 (FVALAFLAMITIICYLAIIPVLL), and 115-137 (IIYTILAIAEVIILLLAASGLLQ).

The protein localises to the cell membrane. This is an uncharacterized protein from Archaeoglobus fulgidus (strain ATCC 49558 / DSM 4304 / JCM 9628 / NBRC 100126 / VC-16).